The following is a 122-amino-acid chain: Protein TCL1B3 (122 aa).

This sequence belongs to the TCL1 family.

In Mus musculus (Mouse), this protein is Protein TCL1B3 (Tcl1b3).